The chain runs to 539 residues: MSVKGITPQELAAYGIHNVSEIVYNPSYDLLFEEETKPTLEGYERGTLTTTGAIAVDTGIFTGRSPKDKYIVRDAITQDTVWWADQGKGKNDNKPLSQEIWSHLKGLVTEQLSGKRLFVVDTFCGANADTRLQVRFITEVAWQAHFVKNMFIRPSDEELARFEPDFIVMNGAKCTNPQWKEQGLNSENFVAFNLTERMQLIGGTWYGGEMKKGMFSMMNYLLPLKGIASMHCSANVGEKGDVAIFFGLSGTGKTTLSTDPKRKLIGDDEHGWDDDGVFNFEGGCYAKTIKLSEEAEPDIYHAIKRDALLENVVVLADGTVDFNDGSKTENTRVSYPIYHIDNIVKPVSKAGHATKVIFLTADAFGVLPPVSRLTANQTQYHFLSGFTAKLAGTERGVTEPTPTFSACFGAAFLSLHPTQYAEVLVKRMQAVGAQAYLVNTGWNGTGKRISIKDTRAIIDAILNGEIDKAETFTLPIFDLAVPMSLPGVNPDILDPRDTYADKAQWQEKAEDLAKRFATNFDKYTDTPAGAALVSAGPKI.

Substrate is bound by residues Arg64, Tyr206, and Lys212. ATP contacts are provided by residues Lys212, His231, and Gly247–Thr255. Mn(2+) is bound by residues Lys212 and His231. A Mn(2+)-binding site is contributed by Asp268. ATP-binding positions include Glu296, Arg332, Arg448–Ile449, and Thr454. Substrate is bound at residue Arg332.

The protein belongs to the phosphoenolpyruvate carboxykinase (ATP) family. In terms of assembly, monomer. The cofactor is Mn(2+).

Its subcellular location is the cytoplasm. It catalyses the reaction oxaloacetate + ATP = phosphoenolpyruvate + ADP + CO2. It functions in the pathway carbohydrate biosynthesis; gluconeogenesis. Its function is as follows. Involved in the gluconeogenesis. Catalyzes the conversion of oxaloacetate (OAA) to phosphoenolpyruvate (PEP) through direct phosphoryl transfer between the nucleoside triphosphate and OAA. This is Phosphoenolpyruvate carboxykinase (ATP) from Yersinia pseudotuberculosis serotype O:1b (strain IP 31758).